A 274-amino-acid polypeptide reads, in one-letter code: 4-diphosphocytidyl-2-C-methyl-D-erythritol kinase (274 aa).

The active site involves Lys-7. Pro-90–Ser-100 is an ATP binding site. Asp-132 is an active-site residue.

The protein belongs to the GHMP kinase family. IspE subfamily.

The enzyme catalyses 4-CDP-2-C-methyl-D-erythritol + ATP = 4-CDP-2-C-methyl-D-erythritol 2-phosphate + ADP + H(+). The protein operates within isoprenoid biosynthesis; isopentenyl diphosphate biosynthesis via DXP pathway; isopentenyl diphosphate from 1-deoxy-D-xylulose 5-phosphate: step 3/6. Functionally, catalyzes the phosphorylation of the position 2 hydroxy group of 4-diphosphocytidyl-2C-methyl-D-erythritol. This Dechloromonas aromatica (strain RCB) protein is 4-diphosphocytidyl-2-C-methyl-D-erythritol kinase.